We begin with the raw amino-acid sequence, 184 residues long: Ribosome maturation factor RimM (184 aa).

In terms of domain architecture, PRC barrel spans 101-180 (DGEFFYCDLV…KITTNNAKTL (80 aa)).

The protein belongs to the RimM family. As to quaternary structure, binds ribosomal protein uS19.

It is found in the cytoplasm. In terms of biological role, an accessory protein needed during the final step in the assembly of 30S ribosomal subunit, possibly for assembly of the head region. Essential for efficient processing of 16S rRNA. May be needed both before and after RbfA during the maturation of 16S rRNA. It has affinity for free ribosomal 30S subunits but not for 70S ribosomes. The protein is Ribosome maturation factor RimM of Helicobacter pylori (strain Shi470).